The sequence spans 335 residues: Glyoxylate reductase (335 aa).

Residues 159–162, 181–183, and 240–242 each bind NADP(+); these read MGRI, SRS, and TGR. Catalysis depends on residues R242 and E271. H290 serves as the catalytic Proton donor. Residue 290–292 coordinates NADP(+); sequence HAA.

It belongs to the D-isomer specific 2-hydroxyacid dehydrogenase family. GyaR subfamily. As to quaternary structure, homodimer.

It localises to the cytoplasm. The catalysed reaction is glycolate + NAD(+) = glyoxylate + NADH + H(+). The protein is Glyoxylate reductase of Aeropyrum pernix (strain ATCC 700893 / DSM 11879 / JCM 9820 / NBRC 100138 / K1).